The following is a 306-amino-acid chain: C-type lectin domain family 10 member A (306 aa).

The Cytoplasmic segment spans residues 1 to 37 (MTMAYENFQNLGSEEKNQEAGKAPPQSFLCNILSWTH). Residues 38 to 58 (LLLFSLGLSLLLLVVISVIGS) form a helical; Signal-anchor for type II membrane protein membrane-spanning segment. Over 59–306 (QNSQLRRDLE…VCEMKLAKDS (248 aa)) the chain is Extracellular. 2 N-linked (GlcNAc...) asparagine glycosylation sites follow: Asn76 and Asn168. One can recognise a C-type lectin domain in the interval 174 to 300 (CCPLHWMEHE…QRPYRWVCEM (127 aa)). 3 disulfides stabilise this stretch: Cys175/Cys186, Cys203/Cys298, and Cys276/Cys290.

Homooligomer.

The protein resides in the membrane. Recognizes terminal galactose and N-acetylgalactosamine units. In Rattus norvegicus (Rat), this protein is C-type lectin domain family 10 member A (Clec10a).